A 237-amino-acid chain; its full sequence is MRPSGRKLDQMRSVSIEPNVMKHAEGSCLIRMGETHVLCSASIEDKPPPFLKNTGLGWVTAEYGMLPRATTSRNRREATAGKQSGRTQEIQRLIGRALRAGIDRSALGERQIVIDCDVLQADGGTRCASITGGWVALRLAVNKLLKAGIVVSDPIVDHVAAVSCGIYAGQPVLDLDYAEDSTAGTDGNFVLTGRQRLIEVQMSAEGASFSRDEMGQLLDLAEAGIADLVAAQKAALG.

Phosphate is bound by residues arginine 86 and 124–126 (GTR).

Belongs to the RNase PH family. As to quaternary structure, homohexameric ring arranged as a trimer of dimers.

The catalysed reaction is tRNA(n+1) + phosphate = tRNA(n) + a ribonucleoside 5'-diphosphate. In terms of biological role, phosphorolytic 3'-5' exoribonuclease that plays an important role in tRNA 3'-end maturation. Removes nucleotide residues following the 3'-CCA terminus of tRNAs; can also add nucleotides to the ends of RNA molecules by using nucleoside diphosphates as substrates, but this may not be physiologically important. Probably plays a role in initiation of 16S rRNA degradation (leading to ribosome degradation) during starvation. This chain is Ribonuclease PH, found in Cereibacter sphaeroides (strain ATCC 17025 / ATH 2.4.3) (Rhodobacter sphaeroides).